Here is a 321-residue protein sequence, read N- to C-terminus: p-hydroxybenzoic acid efflux pump subunit AaeA (321 aa).

Residues 22-42 (VVITLVIVLCAIVAIFRVWAF) form a helical membrane-spanning segment.

Belongs to the membrane fusion protein (MFP) (TC 8.A.1) family.

Its subcellular location is the cell inner membrane. In terms of biological role, forms an efflux pump with AaeB. The sequence is that of p-hydroxybenzoic acid efflux pump subunit AaeA from Pectobacterium atrosepticum (strain SCRI 1043 / ATCC BAA-672) (Erwinia carotovora subsp. atroseptica).